We begin with the raw amino-acid sequence, 284 residues long: Undecaprenyl-diphosphatase 2 (284 aa).

Transmembrane regions (helical) follow at residues 6–26, 46–66, 94–114, 119–139, 183–203, 227–247, and 262–282; these read VIFI…EFIP, FAEM…VVLY, FGMN…LFYD, LFNL…LLVV, IMGG…SFFL, TLWI…IIVM, and FAVY…TNII.

This sequence belongs to the UppP family.

It is found in the cell membrane. The catalysed reaction is di-trans,octa-cis-undecaprenyl diphosphate + H2O = di-trans,octa-cis-undecaprenyl phosphate + phosphate + H(+). Functionally, catalyzes the dephosphorylation of undecaprenyl diphosphate (UPP). Confers resistance to bacitracin. In Clostridioides difficile (strain 630) (Peptoclostridium difficile), this protein is Undecaprenyl-diphosphatase 2.